The chain runs to 63 residues: 2-hydroxymuconate tautomerase (63 aa).

Pro2 (proton acceptor; via imino nitrogen) is an active-site residue.

The protein belongs to the 4-oxalocrotonate tautomerase family. In terms of assembly, homohexamer.

The enzyme catalyses (2Z,4E)-2-hydroxyhexa-2,4-dienedioate = (3E)-2-oxohex-3-enedioate. It participates in aromatic compound metabolism; salicylate degradation. Functionally, catalyzes the ketonization of 2-hydroxymuconate stereoselectively to yield 2-oxo-3-hexenedioate. In Comamonas testosteroni (Pseudomonas testosteroni), this protein is 2-hydroxymuconate tautomerase (aphI).